A 235-amino-acid chain; its full sequence is tRNA (guanine-N(1)-)-methyltransferase (235 aa).

Residues G112 and 131-136 (LGDFVL) each bind S-adenosyl-L-methionine.

This sequence belongs to the RNA methyltransferase TrmD family. In terms of assembly, homodimer.

It localises to the cytoplasm. The catalysed reaction is guanosine(37) in tRNA + S-adenosyl-L-methionine = N(1)-methylguanosine(37) in tRNA + S-adenosyl-L-homocysteine + H(+). Specifically methylates guanosine-37 in various tRNAs. In Synechococcus elongatus (strain ATCC 33912 / PCC 7942 / FACHB-805) (Anacystis nidulans R2), this protein is tRNA (guanine-N(1)-)-methyltransferase.